A 680-amino-acid chain; its full sequence is UvrABC system protein B (680 aa).

Residues 27 to 422 (AGALGGVTFQ…GRMAGEHVAE (396 aa)) form the Helicase ATP-binding domain. An ATP-binding site is contributed by 40-47 (GATGTGKT). Residues 93–116 (YYDYYQPEAYIPQTDTYIEKSASI) carry the Beta-hairpin motif. The region spanning 443–609 (QVDDLLHEIH…PIVKRLDANS (167 aa)) is the Helicase C-terminal domain. Residues 641–676 (PELVSQLEIQMRDAAKKLEFEKAAEYRDKIHKLRER) form the UVR domain.

It belongs to the UvrB family. Forms a heterotetramer with UvrA during the search for lesions. Interacts with UvrC in an incision complex.

Its subcellular location is the cytoplasm. Functionally, the UvrABC repair system catalyzes the recognition and processing of DNA lesions. A damage recognition complex composed of 2 UvrA and 2 UvrB subunits scans DNA for abnormalities. Upon binding of the UvrA(2)B(2) complex to a putative damaged site, the DNA wraps around one UvrB monomer. DNA wrap is dependent on ATP binding by UvrB and probably causes local melting of the DNA helix, facilitating insertion of UvrB beta-hairpin between the DNA strands. Then UvrB probes one DNA strand for the presence of a lesion. If a lesion is found the UvrA subunits dissociate and the UvrB-DNA preincision complex is formed. This complex is subsequently bound by UvrC and the second UvrB is released. If no lesion is found, the DNA wraps around the other UvrB subunit that will check the other stand for damage. In Gloeobacter violaceus (strain ATCC 29082 / PCC 7421), this protein is UvrABC system protein B.